Consider the following 201-residue polypeptide: Alanine--tRNA ligase (201 aa).

Belongs to the class-II aminoacyl-tRNA synthetase family. The cofactor is Zn(2+).

It is found in the cytoplasm. The enzyme catalyses tRNA(Ala) + L-alanine + ATP = L-alanyl-tRNA(Ala) + AMP + diphosphate. Functionally, catalyzes the attachment of alanine to tRNA(Ala) in a two-step reaction: alanine is first activated by ATP to form Ala-AMP and then transferred to the acceptor end of tRNA(Ala). Also edits incorrectly charged Ser-tRNA(Ala) and Gly-tRNA(Ala) via its editing domain. The chain is Alanine--tRNA ligase (alaS) from Rhizobium leguminosarum bv. viciae.